The chain runs to 187 residues: Transcriptional activator of sulfur metabolism MET28 (187 aa).

The region spanning 105–168 (DKIKQERRRK…EFWKAKLNDI (64 aa)) is the bZIP domain. Residues 106-136 (KIKQERRRKNTEASQRFRIRKKQKNFENMNK) form a basic motif region. The interval 137-151 (LQNLNTQINKLRDRI) is leucine-zipper.

Belongs to the bZIP family. As to quaternary structure, interacts with MET4 to form a heteromeric complex which also includes CBF1. Forms two alternate complexes associating MET28 with MET4 and either MET31 or MET32. Binds to DNA through the MET4-MET28-CBF1 complex.

It localises to the cytoplasm. The protein localises to the nucleus. Its function is as follows. Acts as an accessory factor in the activation of sulfur amino acids metabolism genes. Possesses no intrinsic transcription activation abilities. Binds to the MET16 promoter as a complex with MET4 and CBF1. Enhances the DNA-binding activity of CBF1. The sequence is that of Transcriptional activator of sulfur metabolism MET28 (MET28) from Saccharomyces cerevisiae (strain ATCC 204508 / S288c) (Baker's yeast).